The following is a 294-amino-acid chain: Diaminopimelate epimerase (294 aa).

The substrate site is built by asparagine 15, glutamine 47, and asparagine 67. Cysteine 76 functions as the Proton donor in the catalytic mechanism. Residues 77-78 (GN), asparagine 163, asparagine 197, and 215-216 (ER) contribute to the substrate site. The Proton acceptor role is filled by cysteine 224. 225–226 (GS) provides a ligand contact to substrate.

Belongs to the diaminopimelate epimerase family. In terms of assembly, homodimer.

It is found in the cytoplasm. The enzyme catalyses (2S,6S)-2,6-diaminopimelate = meso-2,6-diaminopimelate. It participates in amino-acid biosynthesis; L-lysine biosynthesis via DAP pathway; DL-2,6-diaminopimelate from LL-2,6-diaminopimelate: step 1/1. Catalyzes the stereoinversion of LL-2,6-diaminopimelate (L,L-DAP) to meso-diaminopimelate (meso-DAP), a precursor of L-lysine and an essential component of the bacterial peptidoglycan. This is Diaminopimelate epimerase from Mesorhizobium japonicum (strain LMG 29417 / CECT 9101 / MAFF 303099) (Mesorhizobium loti (strain MAFF 303099)).